Consider the following 119-residue polypeptide: Large ribosomal subunit protein bL20 (119 aa).

Belongs to the bacterial ribosomal protein bL20 family.

Its function is as follows. Binds directly to 23S ribosomal RNA and is necessary for the in vitro assembly process of the 50S ribosomal subunit. It is not involved in the protein synthesizing functions of that subunit. This chain is Large ribosomal subunit protein bL20, found in Alcanivorax borkumensis (strain ATCC 700651 / DSM 11573 / NCIMB 13689 / SK2).